The sequence spans 436 residues: Enolase (436 aa).

H159 and E168 together coordinate substrate. The active-site Proton donor is E211. The Mg(2+) site is built by D246, E295, and D320. The substrate site is built by E295 and D320. Residue K345 is the Proton acceptor of the active site. Substrate contacts are provided by residues 372–375 (SHRS) and K396.

This sequence belongs to the enolase family. In terms of assembly, homodimer. Mg(2+) is required as a cofactor.

The protein resides in the cytoplasm. It carries out the reaction (2R)-2-phosphoglycerate = phosphoenolpyruvate + H2O. It functions in the pathway carbohydrate degradation; glycolysis; pyruvate from D-glyceraldehyde 3-phosphate: step 4/5. This Cunninghamella elegans protein is Enolase.